Reading from the N-terminus, the 187-residue chain is Peptidyl-tRNA hydrolase (187 aa).

Tyrosine 14 is a tRNA binding site. Residue histidine 19 is the Proton acceptor of the active site. The tRNA site is built by tyrosine 64 and asparagine 66.

The protein belongs to the PTH family. As to quaternary structure, monomer.

It localises to the cytoplasm. It carries out the reaction an N-acyl-L-alpha-aminoacyl-tRNA + H2O = an N-acyl-L-amino acid + a tRNA + H(+). In terms of biological role, hydrolyzes ribosome-free peptidyl-tRNAs (with 1 or more amino acids incorporated), which drop off the ribosome during protein synthesis, or as a result of ribosome stalling. Catalyzes the release of premature peptidyl moieties from peptidyl-tRNA molecules trapped in stalled 50S ribosomal subunits, and thus maintains levels of free tRNAs and 50S ribosomes. This Carboxydothermus hydrogenoformans (strain ATCC BAA-161 / DSM 6008 / Z-2901) protein is Peptidyl-tRNA hydrolase.